A 267-amino-acid polypeptide reads, in one-letter code: MTRIALGLSYDGSSWQGWQTQPHGQTVQDTLEAALGQFSGTGAPLDTLCAGRTDTGVHAAMQVVHVDTHLNRRAESWVRGVNAFLPSSISIHWAKEVGEDFHARFSARSRTYVYLLWRGRVRPALWAHRAGWCFQPLDVTAMRQAAQALLGEHDFSSFRSSQCQARHPVRHLTRLDIAERGSFLVFTLQANAFLHHMVRNIMGALLQIGQGRESVDWMASLLRARDRRLGAPTFSPDGLYLSAIDYPTLFELPDLDGGSSLLAPFTA.

Asp-54 serves as the catalytic Nucleophile. Tyr-112 provides a ligand contact to substrate.

It belongs to the tRNA pseudouridine synthase TruA family. As to quaternary structure, homodimer.

The enzyme catalyses uridine(38/39/40) in tRNA = pseudouridine(38/39/40) in tRNA. In terms of biological role, formation of pseudouridine at positions 38, 39 and 40 in the anticodon stem and loop of transfer RNAs. The polypeptide is tRNA pseudouridine synthase A (Bordetella avium (strain 197N)).